Here is a 34-residue protein sequence, read N- to C-terminus: MEVNILAFIATALFVLIPTAFLIILYVKTESSSS.

Residues isoleucine 5 to leucine 25 traverse the membrane as a helical segment.

It belongs to the PsbM family. As to quaternary structure, PSII is composed of 1 copy each of membrane proteins PsbA, PsbB, PsbC, PsbD, PsbE, PsbF, PsbH, PsbI, PsbJ, PsbK, PsbL, PsbM, PsbT, PsbX, PsbY, PsbZ, Psb30/Ycf12, at least 3 peripheral proteins of the oxygen-evolving complex and a large number of cofactors. It forms dimeric complexes.

It is found in the plastid. The protein localises to the chloroplast thylakoid membrane. Its function is as follows. One of the components of the core complex of photosystem II (PSII). PSII is a light-driven water:plastoquinone oxidoreductase that uses light energy to abstract electrons from H(2)O, generating O(2) and a proton gradient subsequently used for ATP formation. It consists of a core antenna complex that captures photons, and an electron transfer chain that converts photonic excitation into a charge separation. This subunit is found at the monomer-monomer interface. In Zygnema circumcarinatum (Green alga), this protein is Photosystem II reaction center protein M.